The following is a 99-amino-acid chain: Aspartyl/glutamyl-tRNA(Asn/Gln) amidotransferase subunit C (99 aa).

The protein belongs to the GatC family. Heterotrimer of A, B and C subunits.

The catalysed reaction is L-glutamyl-tRNA(Gln) + L-glutamine + ATP + H2O = L-glutaminyl-tRNA(Gln) + L-glutamate + ADP + phosphate + H(+). The enzyme catalyses L-aspartyl-tRNA(Asn) + L-glutamine + ATP + H2O = L-asparaginyl-tRNA(Asn) + L-glutamate + ADP + phosphate + 2 H(+). In terms of biological role, allows the formation of correctly charged Asn-tRNA(Asn) or Gln-tRNA(Gln) through the transamidation of misacylated Asp-tRNA(Asn) or Glu-tRNA(Gln) in organisms which lack either or both of asparaginyl-tRNA or glutaminyl-tRNA synthetases. The reaction takes place in the presence of glutamine and ATP through an activated phospho-Asp-tRNA(Asn) or phospho-Glu-tRNA(Gln). This chain is Aspartyl/glutamyl-tRNA(Asn/Gln) amidotransferase subunit C, found in Rhodococcus opacus (strain B4).